A 173-amino-acid chain; its full sequence is Co-chaperone protein HscB homolog (173 aa).

A J domain is found at C5–M77.

This sequence belongs to the HscB family. As to quaternary structure, interacts with HscA and stimulates its ATPase activity.

Functionally, co-chaperone involved in the maturation of iron-sulfur cluster-containing proteins. Seems to help targeting proteins to be folded toward HscA. This Pseudomonas fluorescens (strain SBW25) protein is Co-chaperone protein HscB homolog.